Consider the following 213-residue polypeptide: Holliday junction resolvase RecU (213 aa).

Mg(2+) is bound by residues threonine 99, aspartate 101, glutamate 114, and glutamine 133.

This sequence belongs to the RecU family. Mg(2+) serves as cofactor.

Its subcellular location is the cytoplasm. The enzyme catalyses Endonucleolytic cleavage at a junction such as a reciprocal single-stranded crossover between two homologous DNA duplexes (Holliday junction).. In terms of biological role, endonuclease that resolves Holliday junction intermediates in genetic recombination. Cleaves mobile four-strand junctions by introducing symmetrical nicks in paired strands. Promotes annealing of linear ssDNA with homologous dsDNA. Required for DNA repair, homologous recombination and chromosome segregation. In Lactococcus lactis subsp. lactis (strain IL1403) (Streptococcus lactis), this protein is Holliday junction resolvase RecU.